We begin with the raw amino-acid sequence, 579 residues long: Threonylcarbamoyladenosine tRNA methylthiotransferase (579 aa).

A Phosphoserine modification is found at Ser-53. Positions 64 to 172 constitute an MTTase N-terminal domain; it reads QKIWIRTWGC…VVEVVEETIK (109 aa). The [4Fe-4S] cluster site is built by Cys-73 and Cys-109. At Ser-122 the chain carries Phosphoserine. Cys-138, Cys-214, Cys-218, and Cys-221 together coordinate [4Fe-4S] cluster. The region spanning 200-431 is the Radical SAM core domain; that stretch reads RKNPLIEIIS…RVFHSYSPYD (232 aa). The 63-residue stretch at 431 to 493 folds into the TRAM domain; that stretch reads DHKIGERQQV…KHFMKGQPVS (63 aa). A Phosphothreonine modification is found at Thr-499. A helical membrane pass occupies residues 556–578; sequence CALRMSVGLALLGLLFAFFVKVY.

It belongs to the methylthiotransferase family. CDKAL1 subfamily. The cofactor is [4Fe-4S] cluster. Expressed in pancreatic islets.

The protein localises to the endoplasmic reticulum membrane. The catalysed reaction is N(6)-L-threonylcarbamoyladenosine(37) in tRNA + (sulfur carrier)-SH + AH2 + 2 S-adenosyl-L-methionine = 2-methylsulfanyl-N(6)-L-threonylcarbamoyladenosine(37) in tRNA + (sulfur carrier)-H + 5'-deoxyadenosine + L-methionine + A + S-adenosyl-L-homocysteine + 2 H(+). Its function is as follows. Catalyzes the methylthiolation of N6-threonylcarbamoyladenosine (t(6)A), leading to the formation of 2-methylthio-N6-threonylcarbamoyladenosine (ms(2)t(6)A) at position 37 in tRNAs that read codons beginning with adenine. The chain is Threonylcarbamoyladenosine tRNA methylthiotransferase (CDKAL1) from Homo sapiens (Human).